Reading from the N-terminus, the 349-residue chain is GTP 3',8-cyclase (349 aa).

One can recognise a Radical SAM core domain in the interval Pro-24–Pro-249. GTP is bound at residue Arg-33. [4Fe-4S] cluster contacts are provided by Cys-40 and Cys-44. Tyr-46 contacts S-adenosyl-L-methionine. Position 47 (Cys-47) interacts with [4Fe-4S] cluster. Arg-82 contributes to the GTP binding site. Gly-86 provides a ligand contact to S-adenosyl-L-methionine. A GTP-binding site is contributed by Thr-116. Residue Ser-140 coordinates S-adenosyl-L-methionine. Lys-176 serves as a coordination point for GTP. S-adenosyl-L-methionine is bound at residue Met-210. 2 residues coordinate [4Fe-4S] cluster: Cys-273 and Cys-276. Residue Arg-278–Arg-280 coordinates GTP. Cys-290 provides a ligand contact to [4Fe-4S] cluster.

It belongs to the radical SAM superfamily. MoaA family. Monomer and homodimer. The cofactor is [4Fe-4S] cluster.

The catalysed reaction is GTP + AH2 + S-adenosyl-L-methionine = (8S)-3',8-cyclo-7,8-dihydroguanosine 5'-triphosphate + 5'-deoxyadenosine + L-methionine + A + H(+). Its pathway is cofactor biosynthesis; molybdopterin biosynthesis. Catalyzes the cyclization of GTP to (8S)-3',8-cyclo-7,8-dihydroguanosine 5'-triphosphate. The chain is GTP 3',8-cyclase from Sinorhizobium medicae (strain WSM419) (Ensifer medicae).